Consider the following 2374-residue polypeptide: Genome polyprotein (2374 aa).

Residue G115 is the site of N-myristoyl glycine; by host attachment. 2 disordered regions span residues G144–V176 and G707–P739. Over residues G157–N174 the composition is skewed to low complexity. Over residues A716–T728 the composition is skewed to polar residues. The SF3 helicase domain occupies Y1361 to Q1525. Position 1387-1394 (G1387–S1394) interacts with ATP. G1600 is lipidated: N-myristoyl glycine; by host. The helical transmembrane segment at I1649 to L1669 threads the bilayer. Residues G1677–S1699 are disordered. Y1679 bears the O-(5'-phospho-RNA)-tyrosine mark. The region spanning G1700–V1889 is the Peptidase C3 domain. Residues H1748, E1779, and C1852 each act as for protease 3C activity in the active site. Residues S2126–E2243 form the RdRp catalytic domain. Catalysis depends on for RdRp activity residues D2132 and D2229.

As to quaternary structure, interacts with capsid protein VP1. Interacts with capsid protein VP3. In terms of assembly, interacts with capsid protein VP0. Interacts with capsid protein VP3. Interacts with capsid protein VP0. Interacts with capsid protein VP1. As to quaternary structure, homodimer. Interacts with protein 2B. Interacts with protein 2C. In terms of assembly, homodimer. Interacts with host ABCD3. Interacts with protein 2A. Interacts with host ACBD3. Homodimer. Interacts with host ABCD3. Interacts with protein 2A. Interacts with protein 3A. Interacts with protein 3C. Interacts with host ACBD3. As to quaternary structure, homodimer. Interacts with host ABCD3 (via GOLD domain) and PI4KB; these interactions allow the formation of a viral protein/ACBD3/PI4KB complex in order to synthesize PI4P at the viral RNA replication sites. Interacts with protein 2C. Interacts with protein 3C. Protein 3C: Interacts with protein 2A. Protein 3C: Interacts with protein 2C. Post-translationally, specific enzymatic cleavages by the viral protease in vivo yield a variety of precursors and mature proteins. The leader protein-VP0 junction is cleaved by 3C proteinase. The VP1/2A junction is cleaved by the protein 3CD in association with protein 2A. Uridylylated by the polymerase and is covalently linked to the 5'-end of genomic RNA. This uridylylated form acts as a nucleotide-peptide primer for the polymerase.

It localises to the virion. It is found in the host cytoplasm. The protein resides in the host cytoplasmic vesicle membrane. Its subcellular location is the host Golgi apparatus membrane. It carries out the reaction Selective cleavage of Gln-|-Gly bond in the poliovirus polyprotein. In other picornavirus reactions Glu may be substituted for Gln, and Ser or Thr for Gly.. It catalyses the reaction RNA(n) + a ribonucleoside 5'-triphosphate = RNA(n+1) + diphosphate. The catalysed reaction is ATP + H2O = ADP + phosphate + H(+). Required for viral RNA replication and viral RNA encapsidation. Does not have any proteolytic activity. Its function is as follows. Forms an icosahedral capsid of pseudo T=3 symmetry with capsid proteins VP0 and VP3. Together they form an icosahedral capsid composed of 60 copies of each VP0, VP1, and VP3. All the three latter proteins contain a beta-sheet structure called beta-barrel jelly roll. Functionally, forms an icosahedral capsid of pseudo T=3 symmetry with capsid proteins VP1 and VP3. Together they form an icosahedral capsid composed of 60 copies of each VP0, VP1, and VP3. All the three latter proteins contain a beta-sheet structure called beta-barrel jelly roll. In terms of biological role, forms an icosahedral capsid of pseudo T=3 symmetry with capsid proteins VP0 and VP1. Together they form an icosahedral capsid composed of 60 copies of each VP0, VP1, and VP3. All the three latter proteins contain a beta-sheet structure called beta-barrel jelly roll. Required for viral RNA replication. Does not have any proteolytic activity. Its function is as follows. Affects membrane integrity and causes an increase in membrane permeability. Functionally, induces and associates with structural rearrangements of intracellular membranes. Displays RNA-binding, nucleotide binding and NTPase activities. May play a role in virion morphogenesis and viral RNA encapsidation by interacting with the capsid protein VP3. In terms of biological role, serves as membrane anchor via its hydrophobic domain. Plays an essential role in viral RNA replication by recruiting PI4KB at the viral replication sites, thereby allowing the formation of rearranged membranous structures where viral replication takes place. Forms a primer, VPg-pU, which is utilized by the polymerase for the initiation of RNA chains. Its function is as follows. Cysteine protease that generates mature viral proteins from the precursor polyprotein. In addition to its proteolytic activity, it binds to viral RNA, and thus influences viral genome replication. RNA and substrate cooperatively bind to the protease. Functionally, replicates the genomic and antigenomic RNAs by recognizing replications specific signals. Performs VPg uridylylation. The polypeptide is Genome polyprotein (Salivirus A (isolate Human/Nigeria/NG-J1/2007) (SV-A)).